The sequence spans 502 residues: MKPFSQFFVFVVTVSATSYIDAFTRNDFPNDFLFGAATSAYQWEGAFDEDGKSPSVWDTTSHCDSGSNNGDIACDGYHKYKEDVMLMAEMGLESFRFSISWSRLIPNGRGRINPKGLLFYKNLIKELRSHGIEPQVTLYHYDLPQSLEDEYGGWINRKIIEDFTAFADVCFREFGEDVKLWTKINEATLFAIGSYGDGMRYGHCPPMNYSTANVCTETYIAGHNMLLAHSSASNLYKLKYKTKQRGSVGLSIYAYGLSPYTDSKDDETATERAEAFLFGWMLKPLVVGDYPDIMKRTLGSRLPVFSEEESKQVKGSSDFVGVVHYNTFYVTNRPAPSLVTSINKLFFADIGAYLIAAGNASLFEFDAVPWGLEGILQHIKQSYNNPPIYILENGKPMKHGSTLQDTPRAEFIQAYIGAVHNAITNGSDTRGYFVWSMIDLYELIGRYMTSYGMYYVNFSDPGRKRSPKLSASWYTGFLNGTIDVASQDTIQLQRKCSGSSSL.

A signal peptide spans 1-22 (MKPFSQFFVFVVTVSATSYIDA). A beta-D-glucoside-binding positions include Gln-42, His-140, and 185 to 186 (NE). Glu-186 functions as the Proton donor in the catalytic mechanism. Asn-208 carries an N-linked (GlcNAc...) asparagine glycan. Tyr-325 contacts a beta-D-glucoside. An N-linked (GlcNAc...) asparagine glycan is attached at Asn-359. Glu-392 provides a ligand contact to a beta-D-glucoside. Glu-392 serves as the catalytic Nucleophile. Asn-425 carries N-linked (GlcNAc...) asparagine glycosylation. 2 residues coordinate a beta-D-glucoside: Trp-435 and Tyr-451. Residues Asn-457 and Asn-479 are each glycosylated (N-linked (GlcNAc...) asparagine).

It belongs to the glycosyl hydrolase 1 family.

It carries out the reaction Hydrolysis of terminal, non-reducing beta-D-glucosyl residues with release of beta-D-glucose.. The protein is Beta-glucosidase 7 of Arabidopsis thaliana (Mouse-ear cress).